The chain runs to 264 residues: Thymidylate synthase (264 aa).

Arg-21 contributes to the dUMP binding site. His-51 is a (6R)-5,10-methylene-5,6,7,8-tetrahydrofolate binding site. Position 126–127 (126–127 (RR)) interacts with dUMP. Cys-146 acts as the Nucleophile in catalysis. DUMP-binding positions include 166-169 (RSAD), Asn-177, and 207-209 (HLY). Asp-169 provides a ligand contact to (6R)-5,10-methylene-5,6,7,8-tetrahydrofolate. Ala-263 contacts (6R)-5,10-methylene-5,6,7,8-tetrahydrofolate.

The protein belongs to the thymidylate synthase family. Bacterial-type ThyA subfamily. Homodimer.

Its subcellular location is the cytoplasm. The catalysed reaction is dUMP + (6R)-5,10-methylene-5,6,7,8-tetrahydrofolate = 7,8-dihydrofolate + dTMP. Its pathway is pyrimidine metabolism; dTTP biosynthesis. In terms of biological role, catalyzes the reductive methylation of 2'-deoxyuridine-5'-monophosphate (dUMP) to 2'-deoxythymidine-5'-monophosphate (dTMP) while utilizing 5,10-methylenetetrahydrofolate (mTHF) as the methyl donor and reductant in the reaction, yielding dihydrofolate (DHF) as a by-product. This enzymatic reaction provides an intracellular de novo source of dTMP, an essential precursor for DNA biosynthesis. The polypeptide is Thymidylate synthase (Alkalilimnicola ehrlichii (strain ATCC BAA-1101 / DSM 17681 / MLHE-1)).